A 255-amino-acid polypeptide reads, in one-letter code: 1-acyl-sn-glycerol-3-phosphate acyltransferase (255 aa).

Residues 78–83 (HVSWLD) carry the HXXXXD motif motif.

This sequence belongs to the 1-acyl-sn-glycerol-3-phosphate acyltransferase family.

It is found in the cell inner membrane. It carries out the reaction a 1-acyl-sn-glycero-3-phosphate + an acyl-CoA = a 1,2-diacyl-sn-glycero-3-phosphate + CoA. It participates in phospholipid metabolism; CDP-diacylglycerol biosynthesis; CDP-diacylglycerol from sn-glycerol 3-phosphate: step 2/3. Converts lysophosphatidic acid (LPA) into phosphatidic acid by incorporating acyl moiety at the 2 position. The polypeptide is 1-acyl-sn-glycerol-3-phosphate acyltransferase (plsC) (Neisseria gonorrhoeae).